We begin with the raw amino-acid sequence, 921 residues long: Translation initiation factor IF-2 (921 aa).

Disordered regions lie at residues 81–118 (AVAE…AAAP), 175–194 (PVVE…ANQA), and 219–301 (VAPA…KKHE). Residues 96–112 (PAAPTPPEVPAAAPAPP) show a composition bias toward pro residues. Low complexity predominate over residues 229–241 (RPSPAAGAPSRGA). Residues 292–301 (KKKEQPKKHE) are compositionally biased toward basic and acidic residues. A tr-type G domain is found at 421 to 590 (KRPPVVTIMG…LLQADLMELK (170 aa)). Positions 430–437 (GHVDHGKT) are G1. 430-437 (GHVDHGKT) provides a ligand contact to GTP. The tract at residues 455 to 459 (GITQH) is G2. The tract at residues 476-479 (DTPG) is G3. Residues 476–480 (DTPGH) and 530–533 (NKID) each bind GTP. A G4 region spans residues 530-533 (NKID). The interval 566-568 (SAK) is G5.

This sequence belongs to the TRAFAC class translation factor GTPase superfamily. Classic translation factor GTPase family. IF-2 subfamily.

It localises to the cytoplasm. Its function is as follows. One of the essential components for the initiation of protein synthesis. Protects formylmethionyl-tRNA from spontaneous hydrolysis and promotes its binding to the 30S ribosomal subunits. Also involved in the hydrolysis of GTP during the formation of the 70S ribosomal complex. This chain is Translation initiation factor IF-2, found in Pelobacter propionicus (strain DSM 2379 / NBRC 103807 / OttBd1).